Reading from the N-terminus, the 588-residue chain is ustiloxin B cluster transcription factor ustR (588 aa).

The segment at residues C11–C38 is a DNA-binding region (zn(2)-C6 fungal-type). Residues R68–N92 are disordered.

The protein resides in the nucleus. Functionally, transcription factor that regulates the expression of the gene cluster that mediates the biosynthesis of ustiloxin B, an antimitotic tetrapeptide. This chain is ustiloxin B cluster transcription factor ustR, found in Aspergillus flavus (strain ATCC 200026 / FGSC A1120 / IAM 13836 / NRRL 3357 / JCM 12722 / SRRC 167).